The chain runs to 215 residues: Probable nicotinate-nucleotide adenylyltransferase (215 aa).

The protein belongs to the NadD family.

It catalyses the reaction nicotinate beta-D-ribonucleotide + ATP + H(+) = deamido-NAD(+) + diphosphate. It participates in cofactor biosynthesis; NAD(+) biosynthesis; deamido-NAD(+) from nicotinate D-ribonucleotide: step 1/1. Its function is as follows. Catalyzes the reversible adenylation of nicotinate mononucleotide (NaMN) to nicotinic acid adenine dinucleotide (NaAD). The polypeptide is Probable nicotinate-nucleotide adenylyltransferase (Shewanella sp. (strain W3-18-1)).